Consider the following 172-residue polypeptide: Peptide methionine sulfoxide reductase MsrA (172 aa).

Residue C14 is part of the active site.

This sequence belongs to the MsrA Met sulfoxide reductase family.

It catalyses the reaction L-methionyl-[protein] + [thioredoxin]-disulfide + H2O = L-methionyl-(S)-S-oxide-[protein] + [thioredoxin]-dithiol. The enzyme catalyses [thioredoxin]-disulfide + L-methionine + H2O = L-methionine (S)-S-oxide + [thioredoxin]-dithiol. In terms of biological role, has an important function as a repair enzyme for proteins that have been inactivated by oxidation. Catalyzes the reversible oxidation-reduction of methionine sulfoxide in proteins to methionine. The chain is Peptide methionine sulfoxide reductase MsrA from Streptomyces coelicolor (strain ATCC BAA-471 / A3(2) / M145).